Here is a 389-residue protein sequence, read N- to C-terminus: Putative DNA processing protein DprA (389 aa).

This sequence belongs to the DprA/Smf family.

Its function is as follows. May help load RecA onto ssDNA. This chain is Putative DNA processing protein DprA, found in Mycobacterium tuberculosis (strain CDC 1551 / Oshkosh).